The sequence spans 178 residues: Ribosome maturation factor RimM (178 aa).

The region spanning 99–178 is the PRC barrel domain; sequence QGEFYWRDLI…EITVDWDPGF (80 aa).

This sequence belongs to the RimM family. Binds ribosomal protein uS19.

The protein resides in the cytoplasm. Its function is as follows. An accessory protein needed during the final step in the assembly of 30S ribosomal subunit, possibly for assembly of the head region. Essential for efficient processing of 16S rRNA. May be needed both before and after RbfA during the maturation of 16S rRNA. It has affinity for free ribosomal 30S subunits but not for 70S ribosomes. This Pseudoalteromonas translucida (strain TAC 125) protein is Ribosome maturation factor RimM.